The following is an 829-amino-acid chain: Protein SEY1 homolog 2 (829 aa).

Residues 1–21 (MDEVSPTKHFTSKPLLPTKTP) are disordered. Residues 1–728 (MDEVSPTKHF…EKENSEIKYQ (728 aa)) are Cytoplasmic-facing. The 223-residue stretch at 83 to 305 (GMDYNAVGIL…FLPQYNKEIP (223 aa)) folds into the GB1/RHD3-type G domain. 93–100 (GAQSSGKS) provides a ligand contact to GTP. Coiled coils occupy residues 372–396 (KKIM…YMES) and 576–596 (DTIE…IKEL). A helical transmembrane segment spans residues 729–749 (IPLYLIVLVIFFGFDEFIAIL). Residues 750 to 752 (TNP) are Lumenal-facing. A helical transmembrane segment spans residues 753 to 773 (LLFILTLIIGGGIYIGYKLNL). Residues 774–829 (GGVAKNYIQYLLSMSLSSTMEYLRTIPFFTPLIDKIWPKDDNKDDDSTEETQEETK) lie on the Cytoplasmic side of the membrane.

This sequence belongs to the TRAFAC class dynamin-like GTPase superfamily. GB1/RHD3 GTPase family. RHD3 subfamily.

Its subcellular location is the endoplasmic reticulum membrane. In terms of biological role, probable GTP-binding protein that may be involved in cell development. The chain is Protein SEY1 homolog 2 from Entamoeba dispar (strain ATCC PRA-260 / SAW760).